The sequence spans 75 residues: UPF0154 protein SERP0914 (75 aa).

A helical transmembrane segment spans residues 3-23; the sequence is IWVAIILIVIALIAGLIGGFL.

Belongs to the UPF0154 family.

The protein localises to the membrane. The sequence is that of UPF0154 protein SERP0914 from Staphylococcus epidermidis (strain ATCC 35984 / DSM 28319 / BCRC 17069 / CCUG 31568 / BM 3577 / RP62A).